A 580-amino-acid polypeptide reads, in one-letter code: External alternative NAD(P)H-ubiquinone oxidoreductase B3, mitochondrial (580 aa).

The transit peptide at 1–38 directs the protein to the mitochondrion; that stretch reads MRPFAYFERLSQAFHDYPSLSKILVVSTISGGGLIVYS. 57-87 serves as a coordination point for FAD; sequence KVVLLGTGWAGASFLKTLNNSSYEVQVISPR. 221 to 257 provides a ligand contact to NAD(+); it reads LHFVVVGGGPTGVEFASELHDFVNEDLVKLYPKAKNL. Residues 377-412 form the EF-hand domain; sequence KVMEDIAAIFKKADKENSGTLTMKEFHEVMSDICDR. Ca(2+) is bound by residues Asp-390, Ser-394, Thr-396, and Glu-401. The Microbody targeting signal motif lies at 571–580; it reads FIFGRDSSRI.

It belongs to the NADH dehydrogenase family. Requires FAD as cofactor. In terms of tissue distribution, expressed at low levels in seedlings, roots, stems, buds and flowers and, to a lower extent, in leaves and cotyledons.

The protein resides in the mitochondrion inner membrane. It is found in the peroxisome. It carries out the reaction a quinone + NADH + H(+) = a quinol + NAD(+). The enzyme catalyses a ubiquinone + NADH + H(+) = a ubiquinol + NAD(+). Its function is as follows. Alternative NADH-ubiquinone oxidoreductase which catalyzes the oxidation of mitochondrial NADH does not translocate protons across the inner mitochondrial membrane. This chain is External alternative NAD(P)H-ubiquinone oxidoreductase B3, mitochondrial (NDB3), found in Arabidopsis thaliana (Mouse-ear cress).